A 184-amino-acid polypeptide reads, in one-letter code: dITP/XTP pyrophosphatase (184 aa).

8 to 13 (TGNKGK) provides a ligand contact to substrate. Glutamate 37 and aspartate 66 together coordinate Mg(2+). The Proton acceptor role is filled by aspartate 66. Substrate is bound by residues serine 67, 142–145 (FGYD), lysine 163, and 168–169 (HR).

This sequence belongs to the HAM1 NTPase family. As to quaternary structure, homodimer. The cofactor is Mg(2+).

It carries out the reaction XTP + H2O = XMP + diphosphate + H(+). It catalyses the reaction dITP + H2O = dIMP + diphosphate + H(+). The enzyme catalyses ITP + H2O = IMP + diphosphate + H(+). In terms of biological role, pyrophosphatase that catalyzes the hydrolysis of nucleoside triphosphates to their monophosphate derivatives, with a high preference for the non-canonical purine nucleotides XTP (xanthosine triphosphate), dITP (deoxyinosine triphosphate) and ITP. Seems to function as a house-cleaning enzyme that removes non-canonical purine nucleotides from the nucleotide pool, thus preventing their incorporation into DNA/RNA and avoiding chromosomal lesions. This chain is dITP/XTP pyrophosphatase, found in Methanosarcina acetivorans (strain ATCC 35395 / DSM 2834 / JCM 12185 / C2A).